Reading from the N-terminus, the 92-residue chain is MARSIKKGPFVDNHLMKKVEAQEGNQKKTVIKTWSRRSTIFPNFIGITFAVYDGRKHVPVYVTEDMVGHKLGEFAPTRTFKGHAVDDKKTRR.

This sequence belongs to the universal ribosomal protein uS19 family.

Protein S19 forms a complex with S13 that binds strongly to the 16S ribosomal RNA. The polypeptide is Small ribosomal subunit protein uS19 (Staphylococcus carnosus (strain TM300)).